The chain runs to 197 residues: Cerebellin-3 (197 aa).

The signal sequence occupies residues 1–24 (MGTEWHKPKLSLALVLLTLEAGWA). Positions 59–197 (APPGRVAFAA…SFSGFLIFPL (139 aa)) constitute a C1q domain. Residues 64-197 (VAFAAVRSHH…SFSGFLIFPL (134 aa)) are necessary for interaction with CBLN3, and homotrimerization. A glycan (N-linked (GlcNAc...) asparagine) is linked at asparagine 82.

Heterohexamer; disulfide-linked heterotrimers. Interacts with CBLN1. May also form oligomers with CBLN2 and CBLN4. Expressed in brain, restricted to the cerebellar cortex. Within the cerebellum, expressed in granule layers (at protein level). Also detected in postsynaptic Purkinje cell spines (at protein level).

It is found in the endoplasmic reticulum. The protein resides in the golgi apparatus. It localises to the cis-Golgi network. The protein localises to the secreted. Its subcellular location is the synapse. May be involved in synaptic functions in the CNS. This is Cerebellin-3 (Cbln3) from Mus musculus (Mouse).